Reading from the N-terminus, the 190-residue chain is Myosin, light chain 1, alkali; skeletal, fast (190 aa).

Over residues 1–17 (MAPKKDAKKPEPPKKAE) the composition is skewed to basic and acidic residues. Residues 1–33 (MAPKKDAKKPEPPKKAEPAPAPAPAPEPPKADA) are disordered. A compositionally biased stretch (pro residues) spans 19–28 (APAPAPAPEP). EF-hand domains lie at 46–81 (DQME…LGQN) and 123–158 (ATYD…LGEK).

As to quaternary structure, myosin is a hexamer of 2 heavy chains and 4 light chains. Does not bind calcium. In terms of tissue distribution, expressed in fast muscle fibers during skeletal muscle differentiation.

Functionally, non-regulatory myosin light chain required for proper formation and/or maintenance of myofibers, and thus appropriate muscle function. The sequence is that of Myosin, light chain 1, alkali; skeletal, fast from Danio rerio (Zebrafish).